The chain runs to 329 residues: Peroxidase 50 (329 aa).

The first 25 residues, 1–25 (MVVVNKTNLLLLLLSLCLTLDLSSA), serve as a signal peptide directing secretion. Disulfide bonds link Cys-36–Cys-119, Cys-69–Cys-74, Cys-125–Cys-325, and Cys-204–Cys-236. His-67 serves as the catalytic Proton acceptor. Residues Asp-68, Val-71, Gly-73, Asp-75, and Ser-77 each coordinate Ca(2+). Pro-167 contributes to the substrate binding site. Residue His-197 coordinates heme b. Position 198 (Thr-198) interacts with Ca(2+). Asn-215 is a glycosylation site (N-linked (GlcNAc...) asparagine). Asp-249, Thr-252, and Asp-257 together coordinate Ca(2+).

It belongs to the peroxidase family. Classical plant (class III) peroxidase subfamily. The cofactor is heme b. Ca(2+) is required as a cofactor. Expressed in roots and leaves.

The protein resides in the secreted. It carries out the reaction 2 a phenolic donor + H2O2 = 2 a phenolic radical donor + 2 H2O. Removal of H(2)O(2), oxidation of toxic reductants, biosynthesis and degradation of lignin, suberization, auxin catabolism, response to environmental stresses such as wounding, pathogen attack and oxidative stress. These functions might be dependent on each isozyme/isoform in each plant tissue. Functionally, exhibits a Ca(2+)-pectate binding affinity which could be interpreted in vivo as a specificity to interact with the pectic structure of the cell wall. The polypeptide is Peroxidase 50 (PER50) (Arabidopsis thaliana (Mouse-ear cress)).